Here is an 865-residue protein sequence, read N- to C-terminus: MVASARVQKLVRRYKLAIATALAILLLQGLVVWSFSGLEEDEAGEKGRQRKPRPLDPGEGSKDTDSSAGRRGSTGRRHGRWRGRAESPGVPVAKVVRAVTSRQRASRRVPPAPPPEAPGRQNLSGAAAGEALVGAAGFPPHGDTGSVEGAPQPTDNGFTPKCEIVGKDALSALARASTKQCQQEIANVVCLHQAGSLMPKAVPRHCQLTGKMSPGIQWDESQAQQPMDGPPVRIAYMLVVHGRAIRQLKRLLKAVYHEQHFFYIHVDKRSDYLHREVVELAQGYDNVRVTPWRMVTIWGGASLLRMYLRSMRDLLEVPGWAWDFFINLSATDYPTRTNEELVAFLSKNRDKNFLKSHGRDNSRFIKKQGLDRLFHECDSHMWRLGERQIPAGIVVDGGSDWFVLTRSFVEYVVYTDDPLVAQLRQFYTYTLLPAESFFHTVLENSLACETLVDNNLRVTNWNRKLGCKCQYKHIVDWCGCSPNDFKPQDFLRLQQVSRPTFFARKFESTVNQEVLEILDFHLYGSYPPGTPALKAYWENTYDAADGPSGLSDVMLTAYTAFARLSLHHAATAAPPMGTPLCRFEPRGLPSSVHLYFYDDHFQGYLVTQAVQPSAQGPAETLEMWLMPQGSLKLLGRSDQASRLQSLEVGTDWDPKERLFRNFGGLLGPLDEPVAVQRWARGPNLTATVVWIDPTYVVATSYDITVDTETEVTQYKPPLSRPLRPGPWTVRLLQFWEPLGETRFLVLPLTFNRKLPLRKDDASWLHAGPPHNEYMEQSFQGLSSILNLPQPELAEEAAQRHTQLTGPALEAWTDRELSSFWSVAGLCAIGPSPCPSLEPCRLTSWSSLSPDPKSELGPVKADGRLR.

Topologically, residues 1 to 15 are cytoplasmic; that stretch reads MVASARVQKLVRRYK. Residues 16 to 36 form a helical; Signal-anchor for type II membrane protein membrane-spanning segment; that stretch reads LAIATALAILLLQGLVVWSFS. The Lumenal portion of the chain corresponds to 37–865; it reads GLEEDEAGEK…GPVKADGRLR (829 aa). Positions 41-157 are disordered; the sequence is DEAGEKGRQR…EGAPQPTDNG (117 aa). The segment covering 53–65 has biased composition (basic and acidic residues); sequence RPLDPGEGSKDTD. Basic residues predominate over residues 73-82; the sequence is STGRRHGRWR. Asn122 carries an N-linked (GlcNAc...) asparagine glycan. Over residues 125-137 the composition is skewed to low complexity; sequence GAAAGEALVGAAG. Intrachain disulfides connect Cys162/Cys190, Cys206/Cys448, Cys467/Cys480, and Cys469/Cys478. UDP-alpha-D-xylose contacts are provided by residues Val239, Asp267, and 296 to 298; that span reads TIW. Residue Asn327 is glycosylated (N-linked (GlcNAc...) asparagine). Residue 400 to 401 participates in UDP-alpha-D-xylose binding; it reads DW. Residues Ser481 and 504–505 contribute to the UDP-alpha-D-xylose site; that span reads RK. Intrachain disulfides connect Cys581–Cys833 and Cys826–Cys839. A glycan (N-linked (GlcNAc...) asparagine) is linked at Asn683. The tract at residues 846–865 is disordered; it reads SLSPDPKSELGPVKADGRLR.

Belongs to the glycosyltransferase 14 family. XylT subfamily. Monomer. Mg(2+) is required as a cofactor. Mn(2+) serves as cofactor. Contains disulfide bonds. Widely expressed. Expressed at higher level in kidney and pancreas.

It is found in the golgi apparatus membrane. The protein resides in the secreted. It catalyses the reaction UDP-alpha-D-xylose + L-seryl-[protein] = 3-O-(beta-D-xylosyl)-L-seryl-[protein] + UDP + H(+). Its pathway is glycan metabolism; chondroitin sulfate biosynthesis. It functions in the pathway glycan metabolism; heparan sulfate biosynthesis. Its function is as follows. Catalyzes the first step in the biosynthesis of chondroitin sulfate, heparan sulfate and dermatan sulfate proteoglycans, such as DCN. Transfers D-xylose from UDP-D-xylose to specific serine residues of the core protein. This chain is Xylosyltransferase 2 (XYLT2), found in Homo sapiens (Human).